The primary structure comprises 339 residues: D-alanine--D-alanine ligase (339 aa).

The ATP-grasp domain maps to 126–333; that stretch reads KQVLASVGMP…YSELVTRLVE (208 aa). 158–213 lines the ATP pocket; the sequence is AGELGYPLFVKPANLGSSVGISKVSGPGELERALDLAFSLGRRVILEAMTAHKPRE. Mg(2+)-binding residues include Asp286, Glu300, and Asn302.

The protein belongs to the D-alanine--D-alanine ligase family. Mg(2+) serves as cofactor. Mn(2+) is required as a cofactor.

Its subcellular location is the cytoplasm. It carries out the reaction 2 D-alanine + ATP = D-alanyl-D-alanine + ADP + phosphate + H(+). It participates in cell wall biogenesis; peptidoglycan biosynthesis. In terms of biological role, cell wall formation. This chain is D-alanine--D-alanine ligase, found in Deinococcus geothermalis (strain DSM 11300 / CIP 105573 / AG-3a).